The sequence spans 117 residues: Small ribosomal subunit protein bS6 (117 aa).

Residues 96–117 form a disordered region; it reads HAEGPSVQMQKRDERDNRRERR. The segment covering 105–117 has biased composition (basic and acidic residues); the sequence is QKRDERDNRRERR.

The protein belongs to the bacterial ribosomal protein bS6 family.

Its function is as follows. Binds together with bS18 to 16S ribosomal RNA. This chain is Small ribosomal subunit protein bS6, found in Ruegeria sp. (strain TM1040) (Silicibacter sp.).